The primary structure comprises 273 residues: Co-chaperone protein DjlA (273 aa).

Over 1 to 6 the chain is Periplasmic; the sequence is MHYWGK. Residues 7–31 traverse the membrane as a helical segment; it reads LLGLIFGVVSGAGFWGIVIGLFIGH. Residues 32–273 lie on the Cytoplasmic side of the membrane; that stretch reads MLDRASVRGN…DLIKKEKGFK (242 aa). A J domain is found at 207–273; it reads DACKVLGVRE…DLIKKEKGFK (67 aa).

As to quaternary structure, homodimer.

The protein resides in the cell inner membrane. In terms of biological role, regulatory DnaK co-chaperone. Direct interaction between DnaK and DjlA is needed for the induction of the wcaABCDE operon, involved in the synthesis of a colanic acid polysaccharide capsule, possibly through activation of the RcsB/RcsC phosphotransfer signaling pathway. The colanic acid capsule may help the bacterium survive conditions outside the host. This is Co-chaperone protein DjlA from Photorhabdus laumondii subsp. laumondii (strain DSM 15139 / CIP 105565 / TT01) (Photorhabdus luminescens subsp. laumondii).